The primary structure comprises 265 residues: MDWLHVVALAVIQGLTEFLPISSSAHLILPSQLLGWPDQGLAFDVAVHVGSLAAVVLAFHREVAHILRDWVAQCRGGPATPESRLGWAVIVGTLPAVVIGFLLENVIESYLRASLVIAITTLLFGLLLWWADVRGSRRHALTAMTLRNALIIGFAQALALIPGTSRSGITITAALLLGFTRQAAARFSFLLSIPLILAAGSLKGVELIESGEGVAWGTLVAGTLMSFVAAWLCIKLFLAALDRIGMLPFVIYRLILGIVLLVWVA.

Helical transmembrane passes span 1–21 (MDWL…FLPI), 40–60 (GLAF…LAFH), 87–107 (WAVI…ENVI), 113–133 (ASLV…WADV), 151–173 (IIGF…TITA), 188–208 (SFLL…VELI), 214–234 (VAWG…WLCI), and 244–264 (IGML…LVWV).

Belongs to the UppP family.

The protein resides in the cell inner membrane. The enzyme catalyses di-trans,octa-cis-undecaprenyl diphosphate + H2O = di-trans,octa-cis-undecaprenyl phosphate + phosphate + H(+). Functionally, catalyzes the dephosphorylation of undecaprenyl diphosphate (UPP). Confers resistance to bacitracin. This is Undecaprenyl-diphosphatase from Chromohalobacter salexigens (strain ATCC BAA-138 / DSM 3043 / CIP 106854 / NCIMB 13768 / 1H11).